A 141-amino-acid chain; its full sequence is Nuclear transcription factor Y subunit B-1 (141 aa).

The disordered stretch occupies residues 1 to 23 (MADTPSSPAGDGGESGGSVREQD). Residue Ala-2 is modified to N-acetylalanine. A DNA-binding region spans residues 26–32 (LPIANIS). Positions 53 to 64 (VQECVSEFISFI) are subunit association domain (SAD). The disordered stretch occupies residues 114-141 (DNKGSGKSGDGSNRDAGGGVSGEEMPSW).

It belongs to the NFYB/HAP3 subunit family. In terms of assembly, heterotrimeric transcription factor composed of three components, NF-YA, NF-YB and NF-YC. NF-YB and NF-YC must interact and dimerize for NF-YA association and DNA binding. Binds directly with DPB3-1. Ubiquitous. Predominantly expressed in leaves, flowers and siliques.

Its subcellular location is the nucleus. Its function is as follows. Component of the NF-Y/HAP transcription factor complex. The NF-Y complex stimulates the transcription of various genes by recognizing and binding to a CCAAT motif in promoters. The sequence is that of Nuclear transcription factor Y subunit B-1 from Arabidopsis thaliana (Mouse-ear cress).